We begin with the raw amino-acid sequence, 26 residues long: Orexigenic neuropeptide 26RFa (26 aa).

Phe-26 is modified (phenylalanine amide).

As to expression, brain.

The protein localises to the secreted. In terms of biological role, may have orexigenic activity. May promote aldosterone secretion by the adrenal gland. This is Orexigenic neuropeptide 26RFa from Pelophylax lessonae (Pool frog).